The primary structure comprises 319 residues: Beta-ketoacyl-[acyl-carrier-protein] synthase III (319 aa).

Active-site residues include Cys112 and His246. An ACP-binding region spans residues 247–251 (QANFR). Asn276 is an active-site residue.

It belongs to the thiolase-like superfamily. FabH family. Homodimer.

Its subcellular location is the cytoplasm. The catalysed reaction is malonyl-[ACP] + acetyl-CoA + H(+) = 3-oxobutanoyl-[ACP] + CO2 + CoA. The protein operates within lipid metabolism; fatty acid biosynthesis. Its function is as follows. Catalyzes the condensation reaction of fatty acid synthesis by the addition to an acyl acceptor of two carbons from malonyl-ACP. Catalyzes the first condensation reaction which initiates fatty acid synthesis and may therefore play a role in governing the total rate of fatty acid production. Possesses both acetoacetyl-ACP synthase and acetyl transacylase activities. Its substrate specificity determines the biosynthesis of branched-chain and/or straight-chain of fatty acids. The polypeptide is Beta-ketoacyl-[acyl-carrier-protein] synthase III (Pseudoalteromonas atlantica (strain T6c / ATCC BAA-1087)).